The following is a 212-amino-acid chain: External core antigen (212 aa).

The N-terminal stretch at 1 to 19 (MQLFHLCLIISCSCPTVQA) is a signal peptide. An HBEAG region spans residues 25-27 (GWL). A disordered region spans residues 165-212 (NAPILSTLPETTVVRRRGRSPRRRTPSPRRRRSQSPRRRRSQSRESQC). A compositionally biased stretch (basic residues) spans 178 to 205 (VRRRGRSPRRRTPSPRRRRSQSPRRRRS). The 1; half-length repeat unit spans residues 184 to 190 (SPRRRTP). The interval 184–206 (SPRRRTPSPRRRRSQSPRRRRSQ) is 3 X 8 AA repeats of S-P-R-R-R-R-S-Q. Positions 184 to 212 (SPRRRTPSPRRRRSQSPRRRRSQSRESQC) are excised as a propeptide. 2 consecutive repeat copies span residues 191–198 (SPRRRRSQ) and 199–206 (SPRRRRSQ).

This sequence belongs to the orthohepadnavirus precore antigen family. Homodimerizes. Post-translationally, phosphorylated. Cleaved by host furin.

It localises to the secreted. The protein resides in the host nucleus. Functionally, may regulate immune response to the intracellular capsid in acting as a T-cell tolerogen, by having an immunoregulatory effect which prevents destruction of infected cells by cytotoxic T-cells. This immune regulation may predispose to chronicity during perinatal infections and prevent severe liver injury during adult infections. This is External core antigen from Homo sapiens (Human).